A 245-amino-acid chain; its full sequence is Balbiani ring A 28 kDa protein (245 aa).

An N-terminal signal peptide occupies residues methionine 1–serine 16. Residues serine 33, serine 40, serine 92, serine 93, and serine 115 each carry the phosphoserine modification.

As to expression, salivary gland.

The protein localises to the secreted. Used by the larvae to construct a supramolecular structure, the larval tube. The protein is Balbiani ring A 28 kDa protein of Chironomus thummi thummi (Midge).